The primary structure comprises 502 residues: Probable mitochondrial-processing peptidase subunit alpha (502 aa).

The protein belongs to the peptidase M16 family. Heterodimer of mas2 (alpha) and mas1 (beta) subunits, forming the mitochondrial processing protease (MPP) in which mas2 is involved in substrate recognition and binding and mas1 is the catalytic subunit.

The protein localises to the mitochondrion matrix. In terms of biological role, substrate recognition and binding subunit of the essential mitochondrial processing protease (MPP), which cleaves the mitochondrial sequence off newly imported precursors proteins. This Schizosaccharomyces pombe (strain 972 / ATCC 24843) (Fission yeast) protein is Probable mitochondrial-processing peptidase subunit alpha (mas2).